A 263-amino-acid chain; its full sequence is Glucosamine-6-phosphate deaminase (263 aa).

Residue aspartate 67 is the Proton acceptor; for enolization step of the active site. The active-site For ring-opening step is the asparagine 136. The active-site Proton acceptor; for ring-opening step is the histidine 138. Catalysis depends on glutamate 143, which acts as the For ring-opening step.

This sequence belongs to the glucosamine/galactosamine-6-phosphate isomerase family. NagB subfamily. Homohexamer.

The catalysed reaction is alpha-D-glucosamine 6-phosphate + H2O = beta-D-fructose 6-phosphate + NH4(+). Its pathway is amino-sugar metabolism; N-acetylneuraminate degradation; D-fructose 6-phosphate from N-acetylneuraminate: step 5/5. Its function is as follows. Catalyzes the reversible isomerization-deamination of glucosamine 6-phosphate (GlcN6P) to form fructose 6-phosphate (Fru6P) and ammonium ion. The chain is Glucosamine-6-phosphate deaminase from Cellvibrio japonicus (strain Ueda107) (Pseudomonas fluorescens subsp. cellulosa).